Here is a 198-residue protein sequence, read N- to C-terminus: Large ribosomal subunit protein uL23c (198 aa).

The N-terminal 76 residues, 1 to 76, are a transit peptide targeting the chloroplast; the sequence is MATTAPNLHS…SFGRDLMVAQ (76 aa).

Belongs to the universal ribosomal protein uL23 family. In terms of assembly, component of the chloroplast large ribosomal subunit (LSU). Mature 70S chloroplast ribosomes of higher plants consist of a small (30S) and a large (50S) subunit. The 30S small subunit contains 1 molecule of ribosomal RNA (16S rRNA) and 24 different proteins. The 50S large subunit contains 3 rRNA molecules (23S, 5S and 4.5S rRNA) and 33 different proteins.

It is found in the plastid. It localises to the chloroplast. In terms of biological role, component of the chloroplast ribosome (chloro-ribosome), a dedicated translation machinery responsible for the synthesis of chloroplast genome-encoded proteins, including proteins of the transcription and translation machinery and components of the photosynthetic apparatus. The sequence is that of Large ribosomal subunit protein uL23c (RPL23) from Spinacia oleracea (Spinach).